Consider the following 192-residue polypeptide: Ribosome maturation factor RimM (192 aa).

The PRC barrel domain occupies 116–192 (PGEYYWVDLI…RIIVDWQPDY (77 aa)).

The protein belongs to the RimM family. As to quaternary structure, binds ribosomal protein uS19.

The protein localises to the cytoplasm. An accessory protein needed during the final step in the assembly of 30S ribosomal subunit, possibly for assembly of the head region. Essential for efficient processing of 16S rRNA. May be needed both before and after RbfA during the maturation of 16S rRNA. It has affinity for free ribosomal 30S subunits but not for 70S ribosomes. This chain is Ribosome maturation factor RimM, found in Verminephrobacter eiseniae (strain EF01-2).